A 428-amino-acid polypeptide reads, in one-letter code: Anaerobic glycerol-3-phosphate dehydrogenase subunit B (428 aa).

This sequence belongs to the anaerobic G-3-P dehydrogenase subunit B family. As to quaternary structure, composed of a catalytic GlpA/B dimer and of membrane bound GlpC. The cofactor is FMN.

The catalysed reaction is a quinone + sn-glycerol 3-phosphate = dihydroxyacetone phosphate + a quinol. It participates in polyol metabolism; glycerol degradation via glycerol kinase pathway; glycerone phosphate from sn-glycerol 3-phosphate (anaerobic route): step 1/1. Conversion of glycerol 3-phosphate to dihydroxyacetone. Uses fumarate or nitrate as electron acceptor. The polypeptide is Anaerobic glycerol-3-phosphate dehydrogenase subunit B (Actinobacillus pleuropneumoniae serotype 5b (strain L20)).